The chain runs to 856 residues: Genome polyprotein (856 aa).

The Peptidase S30 domain occupies 141 to 284 (KLTEGQMNHL…QSVLNSMIQF (144 aa)). Active-site for P1 proteinase activity residues include His-192, Asp-201, and Ser-235. An Involved in interaction with stylet and aphid transmission motif is present at residues 334–337 (KITC). Positions 592-594 (PTK) match the Involved in virions binding and aphid transmission motif. In terms of domain architecture, Peptidase C6 spans 618–740 (LYIAKQGYCY…ESDIKHYRVG (123 aa)). Catalysis depends on for helper component proteinase activity residues Cys-626 and His-699.

It belongs to the potyviridae genome polyprotein family. In terms of processing, genome polyprotein of potyviruses undergoes post-translational proteolytic processing by the main proteinase NIa-pro resulting in the production of at least ten individual proteins. The P1 proteinase and the HC-pro cleave only their respective C-termini autocatalytically. 6K1 is essential for proper proteolytic separation of P3 from CI.

It catalyses the reaction Hydrolyzes a Gly-|-Gly bond at its own C-terminus, commonly in the sequence -Tyr-Xaa-Val-Gly-|-Gly, in the processing of the potyviral polyprotein.. Required for aphid transmission and also has proteolytic activity. Only cleaves a Gly-Gly dipeptide at its own C-terminus. Interacts with virions and aphid stylets. Acts as a suppressor of RNA-mediated gene silencing, also known as post-transcriptional gene silencing (PTGS), a mechanism of plant viral defense that limits the accumulation of viral RNAs. May have RNA-binding activity. The sequence is that of Genome polyprotein from Potato virus Y (strain O) (PVY).